A 373-amino-acid chain; its full sequence is MEPAVSEPMRDQVARTHLTEDTPKVNADIEKVNQNQAKRCTVIGGSGFLGQHMVEQLLARGYAVNVFDIQQGFDNPQVRFFLGDLCSRQDLYPALKGVNTVFHCASPPPSSNNKELFYRVNYIGTKNVIETCKEAGVQKLILTSSASVIFEGVDIKNGTEDLPYAMKPIDYYTETKILQERAVLGANDPEKNFLTTAIRPHGIFGPRDPQLVPILIEAARNGKMKFVIGNGKNLVDFTFVENVVHGHILAAEQLSRDSTLGGKAFHITNDEPIPFWTFLSRILTGLNYEAPKYHIPYWVAYYLALLLSLLVMVISPVIQLQPTFTPMRVALAGTFHYYSCERAKKAMGYQPLVTMDDAMERTVQSFRHLRRVK.

Residue Met1 is modified to N-acetylmethionine. Thr22 carries the phosphothreonine modification. Catalysis depends on Tyr172, which acts as the Proton acceptor. Lys176 provides a ligand contact to NAD(+). The chain crosses the membrane as a helical span at residues 298–318 (WVAYYLALLLSLLVMVISPVI). The short motif at 370–373 (RRVK) is the Prevents secretion from ER element.

This sequence belongs to the 3-beta-HSD family. As to quaternary structure, homodimer. In terms of tissue distribution, brain, heart, liver, lung, kidney, skin and placenta.

The protein resides in the endoplasmic reticulum membrane. The protein localises to the lipid droplet. The catalysed reaction is a 3beta-hydroxysteroid-4alpha-carboxylate + NADP(+) = a 3-oxosteroid + CO2 + NADPH. The enzyme catalyses a 3beta-hydroxysteroid-4alpha-carboxylate + NAD(+) = a 3-oxosteroid + CO2 + NADH. It catalyses the reaction 4alpha-carboxyzymosterol + NADP(+) = zymosterone + CO2 + NADPH. It carries out the reaction 4alpha-carboxy-4beta-methyl-5alpha-cholest-8-en-3beta-ol + NADP(+) = 4alpha-methyl-5alpha-cholest-8-en-3-one + CO2 + NADPH. The catalysed reaction is 4alpha-carboxy-5alpha-cholest-8-ene-3beta-ol + NADP(+) = 5alpha-cholest-8-en-3-one + CO2 + NADPH. The enzyme catalyses 4beta-methylzymosterol-4alpha-carboxylate + NADP(+) = 3-dehydro-4-methylzymosterol + CO2 + NADPH. It catalyses the reaction 4beta-methylzymosterol-4alpha-carboxylate + NAD(+) = 3-dehydro-4-methylzymosterol + CO2 + NADH. It carries out the reaction 4alpha-carboxy-5alpha-cholest-8-ene-3beta-ol + NAD(+) = 5alpha-cholest-8-en-3-one + CO2 + NADH. The catalysed reaction is 4alpha-carboxy-4beta-methyl-5alpha-cholest-8-en-3beta-ol + NAD(+) = 4alpha-methyl-5alpha-cholest-8-en-3-one + CO2 + NADH. The enzyme catalyses 4alpha-carboxyzymosterol + NAD(+) = zymosterone + CO2 + NADH. The protein operates within steroid biosynthesis; zymosterol biosynthesis; zymosterol from lanosterol: step 4/6. In terms of biological role, catalyzes the NAD(P)(+)-dependent oxidative decarboxylation of the C4 methyl groups of 4-alpha-carboxysterols in post-squalene cholesterol biosynthesis. Also plays a role in the regulation of the endocytic trafficking of EGFR. In Homo sapiens (Human), this protein is Sterol-4-alpha-carboxylate 3-dehydrogenase, decarboxylating (NSDHL).